Reading from the N-terminus, the 44-residue chain is Antimicrobial peptide 2 (44 aa).

Disulfide bonds. As to expression, expressed in flowers but not in leaves, seeds or roots (at protein level).

Antimicrobial peptide. Active against fungal species B.cinerea (IC(50)=5.2 uM), A.niger (IC(50)=2.6 uM) and B.sorokinina (IC(50)=5.2 uM) but not against F.oxysporum, F.graminearum and P.debaryanum at concentrations below 10 uM. Inhibits growth of P.infestans at concentration between 1.3 uM and 5.2 uM. Active against bacterial species P.syringae, B.subtilis, X.campestris and C.michiganense. The sequence is that of Antimicrobial peptide 2 from Taraxacum officinale (Common dandelion).